Consider the following 64-residue polypeptide: Large ribosomal subunit protein bL35 (64 aa).

The protein belongs to the bacterial ribosomal protein bL35 family.

The sequence is that of Large ribosomal subunit protein bL35 from Colwellia psychrerythraea (strain 34H / ATCC BAA-681) (Vibrio psychroerythus).